We begin with the raw amino-acid sequence, 976 residues long: MQDLPAGQAQQPFLTRSFFFFQYHFRESDDANASNRSPVSNPYEPDYDQLSPPPMLGAQRPVPEQNESSRDLLHSSYHGSIGQASYDQGSFNGHNSTYGVGGFGHYPPDLHGRLPGSPGYEYPEPEYDVEASRLAESRLSVMHRTPTMQEWSPNGETLSVSPDFAHGRPDSTYQEFDVDESWMMRQQQAQIGGGGLGRSKTRKVKLVQGSVLSIDYPVPSAVKNAIEPRYRNGPGSMEEEFTKMRYTAATCDPNDFTLRNGFNLRPRMYNRHTELLIAITYYNEDKVLLARTLHYTMKNIQDIVNLKRSKFWNKGGPAWQKIVVCLVFDGLDKVDKNVFDVLATVGVYQDGVLKKDVNGKETVAHIFEYTSQISVTPDQQLVRPDPDKPHRNLPPVQFIFCLKQKNSKKINSHRWLFNAFGRILNPEVAILIDAGTKPGPRALLSLWEGFYNDRDLGGACGEIHVMLGKGGKMLLNPLVAVQNFEYKISNVLDKPLESAFGYVSVLPGAFSAYRFRAIMGRPLEQYFHGDHTLSKTLGKKGIDGMNIFKKNMFLAEDRILCFELVAKASQKWHLSYIKASKGETDVPEGASEFIGQRRRWLNGSFAMSLYSLMHFGRMYGSGHNVVRLFFLHIQFVYNLLNVLFSWFSLAAFYLTTTIIMKLVGTPQVLSGYHGWPFGDMASPIVNVLIKYIYIAFLVLQFVLALGNRPKGAQYTYVLSFMVFGLIQLYLLVLTGYLVYRAFTGTPIEDQISFASGQAFFDSFFGGNTGVAGLIIIALITIYGLNYIASFLYLDPWHMFHSFPQYLVLMSTYINILMVYAFNNWHDVSWGTKGSDAAEALPSANIVKDEKGKEAVVEEIEQEQEDIDSKFEKVVWRALAPMSEMMEEKPEAKDVEDSYKSFRTGLVILWLLCNIVLITFVTTDDFSSLGVSKASDVRTPMYFRFLLYSTGVLSIVRFIGFLWFIGRTGIMCCIARR.

The segment at D29–L72 is disordered. Residues A31 to S40 show a composition bias toward polar residues. N-linked (GlcNAc...) asparagine glycans are attached at residues N32, N66, N95, and N602. 7 consecutive transmembrane segments (helical) span residues L639–I659, I684–A704, V717–L737, L773–L793, S801–F821, T903–D923, and F944–I964.

It belongs to the chitin synthase family. Class III subfamily.

It is found in the cell membrane. It catalyses the reaction [(1-&gt;4)-N-acetyl-beta-D-glucosaminyl](n) + UDP-N-acetyl-alpha-D-glucosamine = [(1-&gt;4)-N-acetyl-beta-D-glucosaminyl](n+1) + UDP + H(+). Functionally, polymerizes chitin, a structural polymer of the cell wall and septum, by transferring the sugar moiety of UDP-GlcNAc to the non-reducing end of the growing chitin polymer. Shows additive effects in septum formation with CHS1, CHS2, CHS4, CHS5, CHS6 and CHS7. Involved in virulence and mediates mycotoxin deoxinivalenol (DON) biosynthesis via the regulation of the expression of TRI4, TRI5 and TRI6. The sequence is that of Chitin synthase 3A from Gibberella zeae (strain ATCC MYA-4620 / CBS 123657 / FGSC 9075 / NRRL 31084 / PH-1) (Wheat head blight fungus).